Consider the following 233-residue polypeptide: MADS-box transcription factor 20 (233 aa).

Residues 1-61 form the MADS-box domain; that stretch reads MGRGKVQVRR…GNLFHYASSH (61 aa). The K-box domain maps to 91-184; that stretch reads EGSMSYDHIK…PTKAAAPPAC (94 aa).

In terms of tissue distribution, expressed in developing seeds and seedling shoots.

Its subcellular location is the nucleus. Functionally, probable transcription factor. This chain is MADS-box transcription factor 20 (MADS20), found in Oryza sativa subsp. japonica (Rice).